Reading from the N-terminus, the 433-residue chain is Ribosome biogenesis protein WDR12 homolog (433 aa).

The ubiquitin-like (UBL) domain stretch occupies residues 21–102 (VEVFVVSYRH…ESVISIECIV (82 aa)). 7 WD repeats span residues 114–151 (ALLD…LTSS), 153–194 (LHEE…SSTF), 203–242 (GHER…TSTV), 270–310 (GHKD…QINT), 312–351 (AAKK…GTLV), 357–397 (GHCG…TPLY), and 401–433 (GHSD…RRKM).

This sequence belongs to the WD repeat WDR12/YTM1 family.

The protein localises to the nucleus. It localises to the nucleolus. The protein resides in the nucleoplasm. Functionally, required for maturation of ribosomal RNAs and formation of the large ribosomal subunit. This is Ribosome biogenesis protein WDR12 homolog from Brugia malayi (Filarial nematode worm).